The chain runs to 228 residues: MNYEAIVLAAGQGKRMNAGMNKQFIELGGEPLIVRTLKVFDGDERCNGIVLVVNPTERGQFEQLFERYRIRKVVAFADGGQERQHSVYNGLQALRSGEIVLIHDGARPFVRIRHLHELADAAVQYGAAIPAVRVKDTIKKVDGLFVEQTIDRSSLWAVQTPQAFRLSLIMEAHEEAKKAGYLGTDDASLVERLGRPVKILEGDYRNIKLTTPEDLLFAEAILASRIAE.

It belongs to the IspD/TarI cytidylyltransferase family. IspD subfamily.

The enzyme catalyses 2-C-methyl-D-erythritol 4-phosphate + CTP + H(+) = 4-CDP-2-C-methyl-D-erythritol + diphosphate. It functions in the pathway isoprenoid biosynthesis; isopentenyl diphosphate biosynthesis via DXP pathway; isopentenyl diphosphate from 1-deoxy-D-xylulose 5-phosphate: step 2/6. In terms of biological role, catalyzes the formation of 4-diphosphocytidyl-2-C-methyl-D-erythritol from CTP and 2-C-methyl-D-erythritol 4-phosphate (MEP). This Geobacillus thermodenitrificans (strain NG80-2) protein is 2-C-methyl-D-erythritol 4-phosphate cytidylyltransferase.